The chain runs to 447 residues: Phosphoglucosamine mutase (447 aa).

The active-site Phosphoserine intermediate is the Ser104. Residues Ser104, Asp243, Asp245, and Asp247 each contribute to the Mg(2+) site. Ser104 is subject to Phosphoserine.

This sequence belongs to the phosphohexose mutase family. Mg(2+) is required as a cofactor. In terms of processing, activated by phosphorylation.

The enzyme catalyses alpha-D-glucosamine 1-phosphate = D-glucosamine 6-phosphate. Catalyzes the conversion of glucosamine-6-phosphate to glucosamine-1-phosphate. This Corynebacterium glutamicum (strain R) protein is Phosphoglucosamine mutase.